The sequence spans 1536 residues: Alpha-2-macroglobulin (1536 aa).

An N-terminal signal peptide occupies residues 1 to 23 (MGMKRLIFLVFLLISFSLFGGYA). The segment at residues 919–922 (CVEQ) is a cross-link (isoglutamyl cysteine thioester (Cys-Gln)).

The protein belongs to the protease inhibitor I39 (alpha-2-macroglobulin) family. Bacterial alpha-2-macroglobulin subfamily.

Its function is as follows. Protects the bacterial cell from peptidases. The chain is Alpha-2-macroglobulin from Thermotoga maritima (strain ATCC 43589 / DSM 3109 / JCM 10099 / NBRC 100826 / MSB8).